We begin with the raw amino-acid sequence, 62 residues long: Photosystem II reaction center protein Z (62 aa).

2 helical membrane-spanning segments follow: residues 8-28 (SVFA…VVLA) and 41-61 (FSGA…NSFI).

Belongs to the PsbZ family. PSII is composed of 1 copy each of membrane proteins PsbA, PsbB, PsbC, PsbD, PsbE, PsbF, PsbH, PsbI, PsbJ, PsbK, PsbL, PsbM, PsbT, PsbY, PsbZ, Psb30/Ycf12, at least 3 peripheral proteins of the oxygen-evolving complex and a large number of cofactors. It forms dimeric complexes.

It localises to the plastid. The protein resides in the chloroplast thylakoid membrane. Functionally, may control the interaction of photosystem II (PSII) cores with the light-harvesting antenna, regulates electron flow through the 2 photosystem reaction centers. PSII is a light-driven water plastoquinone oxidoreductase, using light energy to abstract electrons from H(2)O, generating a proton gradient subsequently used for ATP formation. This Chaetosphaeridium globosum (Charophycean green alga) protein is Photosystem II reaction center protein Z.